The sequence spans 520 residues: Putative transporter svop-1 (520 aa).

Topologically, residues 1 to 85 are cytoplasmic; that stretch reads MGDKAILTEV…LGFGRFQLKL (85 aa). The chain crosses the membrane as a helical span at residues 86–106; it reads SILTGMAWMADAMEMMLLSLI. Over 107 to 120 the chain is Extracellular; sequence SPALACEWGISSVQ. The helical transmembrane segment at 121 to 141 threads the bilayer; the sequence is QALVTTCVFSGMMLSSTFWGK. At 142 to 157 the chain is on the cytoplasmic side; sequence ICDRFGRRKGLTFSTL. The chain crosses the membrane as a helical span at residues 158–178; that stretch reads VACIMGVISGMSPHFYVLLFF. A topological domain (extracellular) is located at residue arginine 179. A helical transmembrane segment spans residues 180-200; it reads GLTGFGIGGVPQSVTLYAEFL. The Cytoplasmic segment spans residues 201–208; that stretch reads PTAQRAKC. A helical transmembrane segment spans residues 209-229; the sequence is VVLIESFWAIGAVFEALLAYF. At 230 to 237 the chain is on the extracellular side; sequence VMESFGWR. The chain crosses the membrane as a helical span at residues 238–258; it reads ALMFLSSLPLGIFAVASFWLP. The Cytoplasmic portion of the chain corresponds to 259 to 319; the sequence is ESARFDMASG…LLSPDLRKTT (61 aa). The helical transmembrane segment at 320–340 threads the bilayer; sequence ILLWCIWAITAFSYYGMVLFT. Topologically, residues 341 to 372 are extracellular; that stretch reads TVLFQSHDECHGGLFSNGTQMEVCQPLTRSDY. The chain crosses the membrane as a helical span at residues 373 to 393; that stretch reads FDLLSTTLAEFPGLIITVLII. The Cytoplasmic portion of the chain corresponds to 394–410; that stretch reads EWFGRKKTMALEYAVFA. A helical transmembrane segment spans residues 411–431; that stretch reads IFTFLLYFCLDRFTVTVLIFV. Residues 432–434 lie on the Extracellular side of the membrane; the sequence is ARA. The helical transmembrane segment at 435-455 threads the bilayer; that stretch reads FISGAFQCAYVYTPEVYPTTL. The Cytoplasmic segment spans residues 456–461; the sequence is RAVGLG. The chain crosses the membrane as a helical span at residues 462–487; that stretch reads TCSAMARIGAIVTPFIAQVASEKSLS. At 488–489 the chain is on the extracellular side; the sequence is LP. Residues 490-509 traverse the membrane as a helical segment; sequence IGIYGTAAILGLIASLSLPI. Topologically, residues 510 to 520 are cytoplasmic; that stretch reads ETKGRQMMDSH.

It belongs to the major facilitator superfamily.

The protein resides in the membrane. In Caenorhabditis elegans, this protein is Putative transporter svop-1.